A 99-amino-acid polypeptide reads, in one-letter code: Signal recognition particle 19 kDa protein (99 aa).

This sequence belongs to the SRP19 family. Part of the signal recognition particle protein translocation system, which is composed of SRP and FtsY. Archaeal SRP consists of a 7S RNA molecule of 300 nucleotides and two protein subunits: SRP54 and SRP19.

It localises to the cytoplasm. Functionally, involved in targeting and insertion of nascent membrane proteins into the cytoplasmic membrane. Binds directly to 7S RNA and mediates binding of the 54 kDa subunit of the SRP. This Pyrococcus abyssi (strain GE5 / Orsay) protein is Signal recognition particle 19 kDa protein.